The primary structure comprises 280 residues: MNKQQLFENIKKKQSFLCVGLDTDIKKIPQHLLSEEDPIFAFNKAIIDATADYCVAYKPNLAFYESLGTKGMMAFEKTVAYLRENYPDQFIIADAKRGDIGNTSEMYARSFFDHIKVDAVTVAPYMGEDSVKPFLIYPEAWVILLALTSNKGSHDFQMTEDANGERLFEKVLKKSQEWANDEQMMYVVGATQGKMFLDIRKQAPNHFLLVPGVGAQGGSLAEVAQYGMNDQCGLLVNSSRAIIYADKTEAFANVAREAAHAVQKEMAGYLHDKGIIPCKA.

The active-site Proton donor is lysine 96.

The protein belongs to the OMP decarboxylase family. Type 2 subfamily.

The catalysed reaction is orotidine 5'-phosphate + H(+) = UMP + CO2. Its pathway is pyrimidine metabolism; UMP biosynthesis via de novo pathway; UMP from orotate: step 2/2. In Parabacteroides distasonis (strain ATCC 8503 / DSM 20701 / CIP 104284 / JCM 5825 / NCTC 11152), this protein is Orotidine 5'-phosphate decarboxylase.